The primary structure comprises 196 residues: Cysteine/O-acetylserine efflux protein (196 aa).

A helical transmembrane segment spans residues 1–21 (MTPTLISAFLTYTLITALTPG). Residues 22 to 41 (PNNILALSSVTSHGLRRSLR) are Cytoplasmic-facing. A helical transmembrane segment spans residues 42 to 62 (VLAGMSVGFIITMLICAALTF). Topologically, residues 63-70 (SLVELDSR) are periplasmic. A helical membrane pass occupies residues 71-91 (FTLVLGWIGAAYILWLAWQIA). Topologically, residues 92–114 (KSKPATGTPSVEPVGFWASLGLQ) are cytoplasmic. A helical membrane pass occupies residues 115-135 (FVNVKIILYGITALSTFVLPV). The Periplasmic portion of the chain corresponds to 136 to 139 (TREP). A helical transmembrane segment spans residues 140-160 (VWLISVSLLLAAIGALGNLCW). Over 161–170 (ALAGHLFQRL) the chain is Cytoplasmic. A helical transmembrane segment spans residues 171–191 (FLLYGRQLNWMLAALLVYCAV). At 192–196 (RIVVE) the chain is on the periplasmic side.

It belongs to the Rht family.

Its subcellular location is the cell inner membrane. It carries out the reaction O-acetyl-L-serine(in) = O-acetyl-L-serine(out). It catalyses the reaction L-cysteine(in) = L-cysteine(out). Its function is as follows. Exporter of O-acetylserine (OAS) and cysteine. The protein is Cysteine/O-acetylserine efflux protein (eamB) of Klebsiella pneumoniae subsp. pneumoniae (strain ATCC 700721 / MGH 78578).